A 473-amino-acid polypeptide reads, in one-letter code: ATP synthase subunit beta (473 aa).

158-165 (GGAGVGKT) is a binding site for ATP.

This sequence belongs to the ATPase alpha/beta chains family. In terms of assembly, F-type ATPases have 2 components, CF(1) - the catalytic core - and CF(0) - the membrane proton channel. CF(1) has five subunits: alpha(3), beta(3), gamma(1), delta(1), epsilon(1). CF(0) has three main subunits: a(1), b(2) and c(9-12). The alpha and beta chains form an alternating ring which encloses part of the gamma chain. CF(1) is attached to CF(0) by a central stalk formed by the gamma and epsilon chains, while a peripheral stalk is formed by the delta and b chains.

It localises to the cell membrane. The enzyme catalyses ATP + H2O + 4 H(+)(in) = ADP + phosphate + 5 H(+)(out). Produces ATP from ADP in the presence of a proton gradient across the membrane. The catalytic sites are hosted primarily by the beta subunits. This Geobacillus thermodenitrificans (strain NG80-2) protein is ATP synthase subunit beta.